The sequence spans 224 residues: Putative adhesin A1G_07050 (224 aa).

An N-terminal signal peptide occupies residues Met-1–Ala-22.

The polypeptide is Putative adhesin A1G_07050 (Rickettsia rickettsii (strain Sheila Smith)).